Reading from the N-terminus, the 398-residue chain is Riboflavin biosynthesis protein RibBA (398 aa).

Positions 1 to 199 (MFHPIEEALE…IKDLIEYRYN (199 aa)) are DHBP synthase. D-ribulose 5-phosphate is bound by residues 26-27 (RE), Asp31, 138-142 (RAGHT), and Glu162. Glu27 is a binding site for Mg(2+). Position 141 (His141) interacts with Mg(2+). The tract at residues 200–398 (ITTLVNREVD…MKKLGHLLHF (199 aa)) is GTP cyclohydrolase II. Residue 251 to 255 (RVHSE) coordinates GTP. Zn(2+) is bound by residues Cys256, Cys267, and Cys269. GTP-binding positions include Gln272, 294-296 (EGR), and Thr316. The active-site Proton acceptor; for GTP cyclohydrolase activity is the Asp328. Arg330 functions as the Nucleophile; for GTP cyclohydrolase activity in the catalytic mechanism. Residues Thr351 and Lys356 each contribute to the GTP site.

In the N-terminal section; belongs to the DHBP synthase family. The protein in the C-terminal section; belongs to the GTP cyclohydrolase II family. Mg(2+) is required as a cofactor. It depends on Mn(2+) as a cofactor. Requires Zn(2+) as cofactor.

The catalysed reaction is D-ribulose 5-phosphate = (2S)-2-hydroxy-3-oxobutyl phosphate + formate + H(+). It carries out the reaction GTP + 4 H2O = 2,5-diamino-6-hydroxy-4-(5-phosphoribosylamino)-pyrimidine + formate + 2 phosphate + 3 H(+). It functions in the pathway cofactor biosynthesis; riboflavin biosynthesis; 2-hydroxy-3-oxobutyl phosphate from D-ribulose 5-phosphate: step 1/1. Its pathway is cofactor biosynthesis; riboflavin biosynthesis; 5-amino-6-(D-ribitylamino)uracil from GTP: step 1/4. Catalyzes the conversion of D-ribulose 5-phosphate to formate and 3,4-dihydroxy-2-butanone 4-phosphate. Its function is as follows. Catalyzes the conversion of GTP to 2,5-diamino-6-ribosylamino-4(3H)-pyrimidinone 5'-phosphate (DARP), formate and pyrophosphate. This Bacillus velezensis (strain DSM 23117 / BGSC 10A6 / LMG 26770 / FZB42) (Bacillus amyloliquefaciens subsp. plantarum) protein is Riboflavin biosynthesis protein RibBA.